The following is a 206-amino-acid chain: Small ribosomal subunit protein uS4A (206 aa).

Residues 98-163 (MRLDNVVYRL…SERFKMFAEN (66 aa)) form the S4 RNA-binding domain.

Belongs to the universal ribosomal protein uS4 family. Part of the 30S ribosomal subunit. Contacts protein S5. The interaction surface between S4 and S5 is involved in control of translational fidelity.

One of the primary rRNA binding proteins, it binds directly to 16S rRNA where it nucleates assembly of the body of the 30S subunit. Its function is as follows. With S5 and S12 plays an important role in translational accuracy. This Clostridium perfringens (strain ATCC 13124 / DSM 756 / JCM 1290 / NCIMB 6125 / NCTC 8237 / Type A) protein is Small ribosomal subunit protein uS4A.